The primary structure comprises 237 residues: NAD(P)H-hydrate epimerase (237 aa).

Positions alanine 11–valine 223 constitute a YjeF N-terminal domain. Asparagine 61–aspartate 65 serves as a coordination point for (6S)-NADPHX. Asparagine 62 and aspartate 123 together coordinate K(+). (6S)-NADPHX-binding positions include glycine 127–proline 133 and aspartate 156. K(+) is bound at residue serine 159.

It belongs to the NnrE/AIBP family. Requires K(+) as cofactor.

It is found in the cytoplasm. Its subcellular location is the mitochondrion. It catalyses the reaction (6R)-NADHX = (6S)-NADHX. The catalysed reaction is (6R)-NADPHX = (6S)-NADPHX. Functionally, catalyzes the epimerization of the S- and R-forms of NAD(P)HX, a damaged form of NAD(P)H that is a result of enzymatic or heat-dependent hydration. This is a prerequisite for the S-specific NAD(P)H-hydrate dehydratase to allow the repair of both epimers of NAD(P)HX. The chain is NAD(P)H-hydrate epimerase from Ajellomyces capsulatus (strain G186AR / H82 / ATCC MYA-2454 / RMSCC 2432) (Darling's disease fungus).